The primary structure comprises 379 residues: UPF0450 protein C17orf58 homolog (379 aa).

Positions M1–A17 are cleaved as a signal peptide. 2 disordered regions span residues R76–T95 and T162–H194. The segment covering S180–H194 has biased composition (basic and acidic residues). Intrachain disulfides connect C234/C308, C238/C312, and C249/C378. Positions C234 to C378 constitute an NTR domain.

Belongs to the UPF0450 family.

The chain is UPF0450 protein C17orf58 homolog from Xenopus laevis (African clawed frog).